A 467-amino-acid polypeptide reads, in one-letter code: MKPTLVLVGRPNVGKSTLFNRLTRSRDAIVADIPGLTRDRHYGHGRLGLKPYLVVDTGGFEPVVKSGILHAMAKQTLQAVDEADIVLFIVDGRQGLAAQDKIIAEQLRKTGQKIILVVNKTEGMPYSSVTAEFHELGLGTPCAVSALHGDHLGELIDFALEGYPYEEETAAEPGQEKCPVIAIAGRPNVGKSTLINTLLGEERVIAFDQPGTTRDSIYVDFEYGQRSYTLIDTAGLRRSGKVWETVEKFSVVKTLQSIEAANVVILVLDAHHEISDQDAHIAGFILETGRSLVVAINKWDGLDDYQREIIKREFERKLGFLSFANLHYISALYGNGVKGLMPSVDAAYAAARAHIPTPKLTRAMLAAVAKQQPPRGGMSRPKLRYAHQGGENPPLIIVHGSMLEHVPQTYRRYLENTFREVFKLKGTPLRVEFRTGHNPYAGKKTPLTEEEARRAHSRRRRNRKKYG.

EngA-type G domains lie at 3-167 and 179-352; these read PTLV…PYEE and PVIA…AAAR. GTP-binding positions include 9 to 16, 56 to 60, 119 to 122, 185 to 192, 232 to 236, and 297 to 300; these read GRPNVGKS, DTGGF, NKTE, DTAGL, and NKWD. The 85-residue stretch at 353–437 folds into the KH-like domain; it reads AHIPTPKLTR…PLRVEFRTGH (85 aa). Positions 434–467 are disordered; the sequence is RTGHNPYAGKKTPLTEEEARRAHSRRRRNRKKYG. The span at 455 to 467 shows a compositional bias: basic residues; the sequence is AHSRRRRNRKKYG.

The protein belongs to the TRAFAC class TrmE-Era-EngA-EngB-Septin-like GTPase superfamily. EngA (Der) GTPase family. As to quaternary structure, associates with the 50S ribosomal subunit.

In terms of biological role, GTPase that plays an essential role in the late steps of ribosome biogenesis. In Nitrosomonas europaea (strain ATCC 19718 / CIP 103999 / KCTC 2705 / NBRC 14298), this protein is GTPase Der.